Consider the following 537-residue polypeptide: Chaperonin GroEL 2 (537 aa).

Residues 29 to 32 (TLGP), 86 to 90 (DGTTT), Gly-413, 477 to 479 (NAA), and Asp-493 each bind ATP.

This sequence belongs to the chaperonin (HSP60) family. Forms a cylinder of 14 subunits composed of two heptameric rings stacked back-to-back. Interacts with the co-chaperonin GroES.

It localises to the cytoplasm. The enzyme catalyses ATP + H2O + a folded polypeptide = ADP + phosphate + an unfolded polypeptide.. Together with its co-chaperonin GroES, plays an essential role in assisting protein folding. The GroEL-GroES system forms a nano-cage that allows encapsulation of the non-native substrate proteins and provides a physical environment optimized to promote and accelerate protein folding. The protein is Chaperonin GroEL 2 of Thermobifida fusca (strain YX).